The following is a 429-amino-acid chain: Tryptophan synthase beta chain 2 (429 aa).

The tract at residues 18–40 is disordered; it reads NINPDLPSPLPEPKNPEGGKNIE. Lys110 bears the N6-(pyridoxal phosphate)lysine mark.

It belongs to the TrpB family. In terms of assembly, tetramer of two alpha and two beta chains. Pyridoxal 5'-phosphate is required as a cofactor.

The catalysed reaction is (1S,2R)-1-C-(indol-3-yl)glycerol 3-phosphate + L-serine = D-glyceraldehyde 3-phosphate + L-tryptophan + H2O. The protein operates within amino-acid biosynthesis; L-tryptophan biosynthesis; L-tryptophan from chorismate: step 5/5. Functionally, the beta subunit is responsible for the synthesis of L-tryptophan from indole and L-serine. This Methanothermobacter thermautotrophicus (strain ATCC 29096 / DSM 1053 / JCM 10044 / NBRC 100330 / Delta H) (Methanobacterium thermoautotrophicum) protein is Tryptophan synthase beta chain 2 (trpB2).